The following is a 524-amino-acid chain: Homeobox protein engrailed-like SMOX-2 (524 aa).

The interval 194 to 218 (SSSSSSSSSSSSSSSSSSCSTNSSS) is disordered. The segment at residues 423-482 (LKRPRTSFTVPQLKRLSQEFEKNRYLDELRRKKLATELDLRESQVKIWFQNKRAKTKKAS) is a DNA-binding region (homeobox).

The protein belongs to the engrailed homeobox family.

The protein resides in the nucleus. In Schistosoma mansoni (Blood fluke), this protein is Homeobox protein engrailed-like SMOX-2 (SMOX-2).